The chain runs to 139 residues: Small ribosomal subunit protein uS12 (139 aa).

The interval 1 to 44 (MPTINQLVRKPRQSKITKSKSPALNKGYNSFKKSLTDVKSPQKR) is disordered. The segment covering 9 to 18 (RKPRQSKITK) has biased composition (basic residues). Residues 19-39 (SKSPALNKGYNSFKKSLTDVK) show a composition bias toward polar residues. Asp102 carries the 3-methylthioaspartic acid modification.

The protein belongs to the universal ribosomal protein uS12 family. As to quaternary structure, part of the 30S ribosomal subunit. Contacts proteins S8 and S17. May interact with IF1 in the 30S initiation complex.

With S4 and S5 plays an important role in translational accuracy. In terms of biological role, interacts with and stabilizes bases of the 16S rRNA that are involved in tRNA selection in the A site and with the mRNA backbone. Located at the interface of the 30S and 50S subunits, it traverses the body of the 30S subunit contacting proteins on the other side and probably holding the rRNA structure together. The combined cluster of proteins S8, S12 and S17 appears to hold together the shoulder and platform of the 30S subunit. This is Small ribosomal subunit protein uS12 from Lysinibacillus sphaericus (strain C3-41).